The following is a 438-amino-acid chain: Ammonium transporter Rh type A (438 aa).

The Cytoplasmic segment spans residues M1–K4. The chain crosses the membrane as a helical span at residues F5–E25. Residues Y26–Y61 lie on the Extracellular side of the membrane. N-linked (GlcNAc...) asparagine glycans are attached at residues N31, N36, N41, and N47. A helical transmembrane segment spans residues P62–L82. Residues K83–G86 lie on the Cytoplasmic side of the membrane. A helical membrane pass occupies residues F87 to M107. Over Q108–G121 the chain is Extracellular. The chain crosses the membrane as a helical span at residues I122–V142. Residues L143–P148 lie on the Cytoplasmic side of the membrane. Residues I149–V169 traverse the membrane as a helical segment. Residues T170–T178 lie on the Extracellular side of the membrane. A helical transmembrane segment spans residues G179–L199. Over Y200 to D218 the chain is Cytoplasmic. The chain crosses the membrane as a helical span at residues L219 to I239. Residues A240 to A249 are Extracellular-facing. Residues I250–L270 traverse the membrane as a helical segment. The Cytoplasmic portion of the chain corresponds to V271–D278. Residues M279–C296 traverse the membrane as a helical segment. Over A297–E300 the chain is Extracellular. Residues I301–Y321 traverse the membrane as a helical segment. Over K322–N342 the chain is Cytoplasmic. A helical membrane pass occupies residues L343 to M363. The Extracellular portion of the chain corresponds to S364–A372. Residues A373–L393 traverse the membrane as a helical segment. Residues K394 to V438 lie on the Cytoplasmic side of the membrane.

This sequence belongs to the ammonium transporter (TC 2.A.49) family. Rh subfamily. As to quaternary structure, homodimer. Heterotrimer; a RHCE monomer interacts with a RHAG homodimer. Component of the ankyrin-1 complex in the erythrocyte, composed of ANK1, RHCE, RHAG, SLC4A1, EPB42, GYPA, GYPB and AQP1. Interacts with GYPB (via the N-terminal); this interaction bridges the (RHAG)2(RHCE) heterotrimer with the SLC4A1 Band 3 I dimer complexed with GYPA. In terms of processing, glycosylated.

It is found in the membrane. It catalyses the reaction methylamine(out) = methylamine(in). The catalysed reaction is NH4(+)(in) = NH4(+)(out). It carries out the reaction CO2(out) = CO2(in). In terms of biological role, component of the ankyrin-1 complex, a multiprotein complex involved in the stability and shape of the erythrocyte membrane. Heterotrimer with RHCE (RHAG)2(RHCE), that transports ammonium and its related derivative methylammonium, in both neutral and ionic forms, across the erythrocyte membrane. The transport of NH4(+) is electrogenic and masks the NH3 transport. Also, may act as a CO2 channel. Moreover in erythrocyte, regulates RHD membrane expression and is associated with rhesus blood group antigen expression. This Mus musculus (Mouse) protein is Ammonium transporter Rh type A.